The sequence spans 154 residues: Endoribonuclease YbeY (154 aa).

Positions 114, 118, and 124 each coordinate Zn(2+).

The protein belongs to the endoribonuclease YbeY family. It depends on Zn(2+) as a cofactor.

The protein localises to the cytoplasm. In terms of biological role, single strand-specific metallo-endoribonuclease involved in late-stage 70S ribosome quality control and in maturation of the 3' terminus of the 16S rRNA. This is Endoribonuclease YbeY from Histophilus somni (strain 2336) (Haemophilus somnus).